We begin with the raw amino-acid sequence, 342 residues long: MAEIYYDNDADLSIIQGKKVAVIGYGSQGHAHAQNLRDSGVEVVIGLKDGSKSTPKAEEAGFRVLSAAEAAQWADVVVILAPDQVQRTLYADDIRANLEAGNALVFGHGFNIRFGYIEAPEGVDVIMVAPKGPGHTVRREYEAGRGVPVIVAVEKDATGAAWPLVLSYAKGIGGLRAGGIKTTFTEETETDLFGEQAVLCGGVSQLVQYGFETLTEAGYQPQVAYFEVLHELKLIVDLMWEGGIAKQRWSVSDTAEYGDYVSGPRVIGPHVKENMKAVLSDIQDGTFAKRFIADQDAGAPEFLALRVKGEQHPIEATGRELRKLFAWNASNDDDYVDGEVAR.

The KARI N-terminal Rossmann domain occupies 2-182 (AEIYYDNDAD…GGLRAGGIKT (181 aa)). Residues 25–28 (YGSQ), Lys-48, Ser-51, Ser-53, and 83–86 (DQVQ) contribute to the NADP(+) site. Residue His-108 is part of the active site. Gly-134 is an NADP(+) binding site. The KARI C-terminal knotted domain occupies 183–328 (TFTEETETDL…RELRKLFAWN (146 aa)). Positions 191, 195, 227, and 231 each coordinate Mg(2+). Ser-252 is a substrate binding site.

This sequence belongs to the ketol-acid reductoisomerase family. It depends on Mg(2+) as a cofactor.

The enzyme catalyses (2R)-2,3-dihydroxy-3-methylbutanoate + NADP(+) = (2S)-2-acetolactate + NADPH + H(+). It catalyses the reaction (2R,3R)-2,3-dihydroxy-3-methylpentanoate + NADP(+) = (S)-2-ethyl-2-hydroxy-3-oxobutanoate + NADPH + H(+). The protein operates within amino-acid biosynthesis; L-isoleucine biosynthesis; L-isoleucine from 2-oxobutanoate: step 2/4. Its pathway is amino-acid biosynthesis; L-valine biosynthesis; L-valine from pyruvate: step 2/4. Its function is as follows. Involved in the biosynthesis of branched-chain amino acids (BCAA). Catalyzes an alkyl-migration followed by a ketol-acid reduction of (S)-2-acetolactate (S2AL) to yield (R)-2,3-dihydroxy-isovalerate. In the isomerase reaction, S2AL is rearranged via a Mg-dependent methyl migration to produce 3-hydroxy-3-methyl-2-ketobutyrate (HMKB). In the reductase reaction, this 2-ketoacid undergoes a metal-dependent reduction by NADPH to yield (R)-2,3-dihydroxy-isovalerate. The sequence is that of Ketol-acid reductoisomerase (NADP(+)) from Leifsonia xyli subsp. xyli (strain CTCB07).